Consider the following 236-residue polypeptide: Uridylate kinase (236 aa).

10-13 (KLSG) is a binding site for ATP. Glycine 52 is a UMP binding site. Glycine 53 and arginine 57 together coordinate ATP. UMP is bound by residues aspartate 72 and 133 to 140 (TGNPFFTT). ATP contacts are provided by threonine 160, tyrosine 166, and aspartate 169.

The protein belongs to the UMP kinase family. In terms of assembly, homohexamer.

Its subcellular location is the cytoplasm. It carries out the reaction UMP + ATP = UDP + ADP. The protein operates within pyrimidine metabolism; CTP biosynthesis via de novo pathway; UDP from UMP (UMPK route): step 1/1. With respect to regulation, inhibited by UTP. Functionally, catalyzes the reversible phosphorylation of UMP to UDP. This chain is Uridylate kinase, found in Phocaeicola vulgatus (strain ATCC 8482 / DSM 1447 / JCM 5826 / CCUG 4940 / NBRC 14291 / NCTC 11154) (Bacteroides vulgatus).